The primary structure comprises 513 residues: Ribonuclease Y (513 aa).

The chain crosses the membrane as a helical span at residues 6–26 (YIIIAVVIIIICVILGLYVVD). Residues 35 to 59 (EASKEARRLKEEAERDAEAKKKEAI) are disordered. The KH domain occupies 203 to 288 (TVHVVNLPND…EMVEKAKKEV (86 aa)). The region spanning 329–422 (VLKHSIEVSH…VQAADAISAA (94 aa)) is the HD domain.

Belongs to the RNase Y family.

It localises to the cell membrane. In terms of biological role, endoribonuclease that initiates mRNA decay. This chain is Ribonuclease Y, found in Clostridium botulinum (strain Okra / Type B1).